Consider the following 331-residue polypeptide: Inositol 2-dehydrogenase (331 aa).

This sequence belongs to the Gfo/Idh/MocA family. In terms of assembly, homotetramer.

The catalysed reaction is myo-inositol + NAD(+) = scyllo-inosose + NADH + H(+). Its function is as follows. Involved in the oxidation of myo-inositol (MI) to 2-keto-myo-inositol (2KMI or 2-inosose). The polypeptide is Inositol 2-dehydrogenase (Renibacterium salmoninarum (strain ATCC 33209 / DSM 20767 / JCM 11484 / NBRC 15589 / NCIMB 2235)).